Here is a 625-residue protein sequence, read N- to C-terminus: Procollagen galactosyltransferase 2 (625 aa).

An N-terminal signal peptide occupies residues 1–26 (MAARLATVACALFLLSSALLRLGCRA). N-linked (GlcNAc...) asparagine glycosylation is found at asparagine 96, asparagine 184, asparagine 381, and asparagine 579. The tract at residues 597-625 (QGHIRSTAKNTEALPPPTSLDTVPSRDEL) is disordered. The Prevents secretion from ER motif lies at 622–625 (RDEL).

The protein belongs to the glycosyltransferase 25 family.

It is found in the endoplasmic reticulum lumen. The catalysed reaction is (5R)-5-hydroxy-L-lysyl-[collagen] + UDP-alpha-D-galactose = (5R)-5-O-(beta-D-galactosyl)-5-hydroxy-L-lysyl-[collagen] + UDP + H(+). Functionally, beta-galactosyltransferase that transfers beta-galactose to hydroxylysine residues of collagen. This is Procollagen galactosyltransferase 2 (Colgalt2) from Mus musculus (Mouse).